We begin with the raw amino-acid sequence, 261 residues long: 3-methyl-2-oxobutanoate hydroxymethyltransferase (261 aa).

Mg(2+)-binding residues include Asp-42 and Asp-81. Residues 42–43 (DS), Asp-81, and Lys-110 each bind 3-methyl-2-oxobutanoate. Glu-112 is a binding site for Mg(2+). Catalysis depends on Glu-179, which acts as the Proton acceptor.

Belongs to the PanB family. As to quaternary structure, homodecamer; pentamer of dimers. Mg(2+) serves as cofactor.

It localises to the cytoplasm. The enzyme catalyses 3-methyl-2-oxobutanoate + (6R)-5,10-methylene-5,6,7,8-tetrahydrofolate + H2O = 2-dehydropantoate + (6S)-5,6,7,8-tetrahydrofolate. The protein operates within cofactor biosynthesis; coenzyme A biosynthesis. In terms of biological role, catalyzes the reversible reaction in which hydroxymethyl group from 5,10-methylenetetrahydrofolate is transferred onto alpha-ketoisovalerate to form ketopantoate. The polypeptide is 3-methyl-2-oxobutanoate hydroxymethyltransferase (Pyrobaculum islandicum (strain DSM 4184 / JCM 9189 / GEO3)).